A 174-amino-acid polypeptide reads, in one-letter code: Transcription antitermination protein NusB (174 aa).

Polar residues predominate over residues 1 to 11 (MSEVETTNDQT). The interval 1–29 (MSEVETTNDQTPAPKRKDKKPSRSQLRSA) is disordered.

This sequence belongs to the NusB family.

In terms of biological role, involved in transcription antitermination. Required for transcription of ribosomal RNA (rRNA) genes. Binds specifically to the boxA antiterminator sequence of the ribosomal RNA (rrn) operons. This Marinomonas sp. (strain MWYL1) protein is Transcription antitermination protein NusB.